A 395-amino-acid chain; its full sequence is S-adenosylmethionine synthase (395 aa).

An ATP-binding site is contributed by histidine 16. Aspartate 18 is a Mg(2+) binding site. Glutamate 44 is a K(+) binding site. Positions 57 and 100 each coordinate L-methionine. Residues 100–110 are flexible loop; sequence QSPDIAGGVNL. ATP-binding positions include 175 to 177, 242 to 243, aspartate 251, 257 to 258, alanine 274, and lysine 278; these read DGK, RF, and RK. Residue aspartate 251 participates in L-methionine binding. Lysine 282 is a binding site for L-methionine.

This sequence belongs to the AdoMet synthase family. In terms of assembly, homotetramer; dimer of dimers. Mg(2+) is required as a cofactor. K(+) serves as cofactor.

The protein resides in the cytoplasm. The enzyme catalyses L-methionine + ATP + H2O = S-adenosyl-L-methionine + phosphate + diphosphate. It participates in amino-acid biosynthesis; S-adenosyl-L-methionine biosynthesis; S-adenosyl-L-methionine from L-methionine: step 1/1. In terms of biological role, catalyzes the formation of S-adenosylmethionine (AdoMet) from methionine and ATP. The overall synthetic reaction is composed of two sequential steps, AdoMet formation and the subsequent tripolyphosphate hydrolysis which occurs prior to release of AdoMet from the enzyme. The polypeptide is S-adenosylmethionine synthase (Thermus thermophilus (strain ATCC BAA-163 / DSM 7039 / HB27)).